Reading from the N-terminus, the 891-residue chain is Alanine--tRNA ligase (891 aa).

4 residues coordinate Zn(2+): H564, H568, C681, and H685.

This sequence belongs to the class-II aminoacyl-tRNA synthetase family. Requires Zn(2+) as cofactor.

Its subcellular location is the cytoplasm. The catalysed reaction is tRNA(Ala) + L-alanine + ATP = L-alanyl-tRNA(Ala) + AMP + diphosphate. Functionally, catalyzes the attachment of alanine to tRNA(Ala) in a two-step reaction: alanine is first activated by ATP to form Ala-AMP and then transferred to the acceptor end of tRNA(Ala). Also edits incorrectly charged Ser-tRNA(Ala) and Gly-tRNA(Ala) via its editing domain. The protein is Alanine--tRNA ligase of Methylorubrum populi (strain ATCC BAA-705 / NCIMB 13946 / BJ001) (Methylobacterium populi).